Reading from the N-terminus, the 216-residue chain is Cytidylate kinase (216 aa).

10–18 (GPAGAGKST) contacts ATP.

Belongs to the cytidylate kinase family. Type 1 subfamily.

It is found in the cytoplasm. It carries out the reaction CMP + ATP = CDP + ADP. The catalysed reaction is dCMP + ATP = dCDP + ADP. The chain is Cytidylate kinase from Clostridioides difficile (strain 630) (Peptoclostridium difficile).